Reading from the N-terminus, the 132-residue chain is MHSLSWFLLVIGLSVGLSSGKWNEKNSVIFTNSLGRNKVLKVNCISNDDNLGFHFLRHGQTYDFSFHDSLFKSEFYCDLWQGPNFKLHAAFTAYEGGGLIVHYGKKNFWDVRDDGIYFTHGQKMPKLEYTWK.

A signal peptide spans 1-20; the sequence is MHSLSWFLLVIGLSVGLSSG.

The protein belongs to the plant self-incompatibility (S1) protein family. Mostly expressed in seedlings, stems, leaves and floral tissues, and, to a lower extent, in roots.

It is found in the secreted. The chain is S-protein homolog 8 from Arabidopsis thaliana (Mouse-ear cress).